A 943-amino-acid polypeptide reads, in one-letter code: Isoleucine--tRNA ligase (943 aa).

A 'HIGH' region motif is present at residues 58–68 (PYANGSIHIGH). Glu-567 is an L-isoleucyl-5'-AMP binding site. Residues 608-612 (KMSKS) carry the 'KMSKS' region motif. Residue Lys-611 coordinates ATP. The Zn(2+) site is built by Cys-906, Cys-909, Cys-926, and Cys-929.

This sequence belongs to the class-I aminoacyl-tRNA synthetase family. IleS type 1 subfamily. As to quaternary structure, monomer. Zn(2+) is required as a cofactor.

Its subcellular location is the cytoplasm. It catalyses the reaction tRNA(Ile) + L-isoleucine + ATP = L-isoleucyl-tRNA(Ile) + AMP + diphosphate. Functionally, catalyzes the attachment of isoleucine to tRNA(Ile). As IleRS can inadvertently accommodate and process structurally similar amino acids such as valine, to avoid such errors it has two additional distinct tRNA(Ile)-dependent editing activities. One activity is designated as 'pretransfer' editing and involves the hydrolysis of activated Val-AMP. The other activity is designated 'posttransfer' editing and involves deacylation of mischarged Val-tRNA(Ile). This Pseudomonas aeruginosa (strain ATCC 15692 / DSM 22644 / CIP 104116 / JCM 14847 / LMG 12228 / 1C / PRS 101 / PAO1) protein is Isoleucine--tRNA ligase.